A 283-amino-acid chain; its full sequence is ATP phosphoribosyltransferase (283 aa).

Belongs to the ATP phosphoribosyltransferase family. Long subfamily. Mg(2+) serves as cofactor.

Its subcellular location is the cytoplasm. It carries out the reaction 1-(5-phospho-beta-D-ribosyl)-ATP + diphosphate = 5-phospho-alpha-D-ribose 1-diphosphate + ATP. It participates in amino-acid biosynthesis; L-histidine biosynthesis; L-histidine from 5-phospho-alpha-D-ribose 1-diphosphate: step 1/9. With respect to regulation, feedback inhibited by histidine. Functionally, catalyzes the condensation of ATP and 5-phosphoribose 1-diphosphate to form N'-(5'-phosphoribosyl)-ATP (PR-ATP). Has a crucial role in the pathway because the rate of histidine biosynthesis seems to be controlled primarily by regulation of HisG enzymatic activity. The sequence is that of ATP phosphoribosyltransferase from Rhodococcus jostii (strain RHA1).